The following is a 177-amino-acid chain: Probable DNA-directed RNA polymerase subunit delta (177 aa).

The HTH HARE-type domain occupies 14-81; the sequence is CSMIEVVHSV…GENRWGLRSW (68 aa). The interval 93-177 is disordered; the sequence is PQPKPKKKRK…ETEEEEEEEL (85 aa). Acidic residues predominate over residues 106–177; the sequence is DGFDDYIEED…ETEEEEEEEL (72 aa).

It belongs to the RpoE family. In terms of assembly, RNAP is composed of a core of 2 alpha, a beta and a beta' subunits. The core is associated with a delta subunit and one of several sigma factors.

In terms of biological role, participates in both the initiation and recycling phases of transcription. In the presence of the delta subunit, RNAP displays an increased specificity of transcription, a decreased affinity for nucleic acids, and an increased efficiency of RNA synthesis because of enhanced recycling. This chain is Probable DNA-directed RNA polymerase subunit delta, found in Bacillus cereus (strain AH187).